The following is a 225-amino-acid chain: MMSILKNDWAPLLQEEFQKPYYVKLRQFLKEEYRTKTIYPDMHDIFNALHYTPYANVKVVILGQDPYHGPNQAHGLSFSVKPGVALPPSLLNIFKELQDDLGCYIPNNGYLLKWAKQGVLLLNTVLTVRRGEANSHKGKGWEYFTDRVIELVNEKREPVVFILWGRHAQAKKALITNEHHYIIEAPHPSPFSAARGFFGSRPFSKTNAFLQQTGREPIDWQIENI.

Aspartate 65 functions as the Proton acceptor in the catalytic mechanism.

This sequence belongs to the uracil-DNA glycosylase (UDG) superfamily. UNG family.

The protein resides in the cytoplasm. It carries out the reaction Hydrolyzes single-stranded DNA or mismatched double-stranded DNA and polynucleotides, releasing free uracil.. In terms of biological role, excises uracil residues from the DNA which can arise as a result of misincorporation of dUMP residues by DNA polymerase or due to deamination of cytosine. This Anoxybacillus flavithermus (strain DSM 21510 / WK1) protein is Uracil-DNA glycosylase.